The chain runs to 692 residues: Elongation factor G (692 aa).

Residues Lys8–Val283 enclose the tr-type G domain. Residues Ala17–Thr24, Asp81–His85, and Asn135–Asp138 each bind GTP.

It belongs to the TRAFAC class translation factor GTPase superfamily. Classic translation factor GTPase family. EF-G/EF-2 subfamily.

It localises to the cytoplasm. Catalyzes the GTP-dependent ribosomal translocation step during translation elongation. During this step, the ribosome changes from the pre-translocational (PRE) to the post-translocational (POST) state as the newly formed A-site-bound peptidyl-tRNA and P-site-bound deacylated tRNA move to the P and E sites, respectively. Catalyzes the coordinated movement of the two tRNA molecules, the mRNA and conformational changes in the ribosome. The protein is Elongation factor G of Exiguobacterium sp. (strain ATCC BAA-1283 / AT1b).